Reading from the N-terminus, the 431-residue chain is Enolase (431 aa).

A disordered region spans residues 27–47 (LESGHSGRAAVPSGASTGSRE). Gln163 serves as a coordination point for (2R)-2-phosphoglycerate. Catalysis depends on Glu205, which acts as the Proton donor. Mg(2+) is bound by residues Asp242, Glu285, and Asp312. Positions 337, 366, 367, and 388 each coordinate (2R)-2-phosphoglycerate. The active-site Proton acceptor is Lys337.

The protein belongs to the enolase family. Requires Mg(2+) as cofactor.

Its subcellular location is the cytoplasm. The protein resides in the secreted. It localises to the cell surface. It catalyses the reaction (2R)-2-phosphoglycerate = phosphoenolpyruvate + H2O. It functions in the pathway carbohydrate degradation; glycolysis; pyruvate from D-glyceraldehyde 3-phosphate: step 4/5. Its function is as follows. Catalyzes the reversible conversion of 2-phosphoglycerate (2-PG) into phosphoenolpyruvate (PEP). It is essential for the degradation of carbohydrates via glycolysis. The chain is Enolase from Oleidesulfovibrio alaskensis (strain ATCC BAA-1058 / DSM 17464 / G20) (Desulfovibrio alaskensis).